The sequence spans 704 residues: MAKITKTFQYGKHTVTLETGEIARQAGGAVIVKVDDTVLLVTAVAAKSAREGQDFFPLTVDYQEKFYAGGRIPGGFFKREGRATEKETLISRLIDRPIRPLFPEDYKNEVQIIATVMSMNPDIDGDIAALIGASAALSLAGTPFKGPIGAAKVGYKNGEYILNPTVTELKDSQLELVVAGTANAVLMVESEAELLSEEVMLGAVTFGHREMQKVINVINELTVEAGTKPSDWVAPAKNDGMIAALKEAVGDQLASAFQVRDKLQRRDAISAIKKDVLGALAPRATIEGWAAGDLAKEFGELEYQTMRGSVLSTKVRIDGRALDTVRPISATAGVLPRTHGSALFTRGETQAIVITTLGTARDGQVIDAVSGEYKENFLFHYNFPPYSVGECGRFGAPKRREIGHGRLAKRGVLAVMPTLEEFPYTIRVVSEITESNGSSSMASVCGSSLALMDAGVPIKAPVAGIAMGLVKEGNDFVVLSDILGDEDHLGDMDFKVAGTAEGVSALQMDIKIEGITEEIMKQALQQAKAGRLHILGEMAHALTTPRQELSDYAPRLLTIKIHPDKIREVIGKGGSTIQAITKETGTQIDIQDDGTIIIASVNAIAAQAAKSRIEQITSDVEPGRIYEGKVAKIMDFGAFVTILPGKDGLVHVSQISSERVEKVGDKLKEGDLVRVKVLEVDKQGRIRLSIKAVEEGEGVQASAE.

Residues Asp487 and Asp493 each contribute to the Mg(2+) site. The KH domain maps to 554 to 613 (PRLLTIKIHPDKIREVIGKGGSTIQAITKETGTQIDIQDDGTIIIASVNAIAAQAAKSRI). Residues 623–691 (GRIYEGKVAK…KQGRIRLSIK (69 aa)) enclose the S1 motif domain.

Belongs to the polyribonucleotide nucleotidyltransferase family. Component of the RNA degradosome, which is a multiprotein complex involved in RNA processing and mRNA degradation. Mg(2+) is required as a cofactor.

The protein resides in the cytoplasm. The enzyme catalyses RNA(n+1) + phosphate = RNA(n) + a ribonucleoside 5'-diphosphate. Functionally, involved in mRNA degradation. Catalyzes the phosphorolysis of single-stranded polyribonucleotides processively in the 3'- to 5'-direction. The chain is Polyribonucleotide nucleotidyltransferase from Xanthomonas axonopodis pv. citri (strain 306).